The primary structure comprises 279 residues: Tryptophan 2,3-dioxygenase (279 aa).

Residues 48-52, tyrosine 110, and arginine 114 contribute to the substrate site; that span reads FIIQH. Histidine 237 contacts heme. Threonine 251 provides a ligand contact to substrate.

Belongs to the tryptophan 2,3-dioxygenase family. Homotetramer. The cofactor is heme.

It carries out the reaction L-tryptophan + O2 = N-formyl-L-kynurenine. It functions in the pathway amino-acid degradation; L-tryptophan degradation via kynurenine pathway; L-kynurenine from L-tryptophan: step 1/2. Heme-dependent dioxygenase that catalyzes the oxidative cleavage of the L-tryptophan (L-Trp) pyrrole ring and converts L-tryptophan to N-formyl-L-kynurenine. Catalyzes the oxidative cleavage of the indole moiety. This Bradyrhizobium sp. (strain BTAi1 / ATCC BAA-1182) protein is Tryptophan 2,3-dioxygenase.